A 427-amino-acid chain; its full sequence is UPF0229 protein YeaH (427 aa).

A compositionally biased stretch (basic and acidic residues) spans asparagine 79–arginine 90. The interval asparagine 79–glutamate 110 is disordered. Residues glutamine 92 to glutamine 102 are compositionally biased toward gly residues.

The protein belongs to the UPF0229 family.

The protein is UPF0229 protein YeaH of Escherichia coli O139:H28 (strain E24377A / ETEC).